A 1033-amino-acid chain; its full sequence is Potassium-transporting ATPase alpha chain 2 (1033 aa).

Residues 1 to 96 (MRRKTLEIYS…NALSPPKQTP (96 aa)) are Cytoplasmic-facing. A helical membrane pass occupies residues 97-117 (EIIKFLKQMIGGFSILLWVGA). The Lumenal portion of the chain corresponds to 118–140 (ILCWIAYGIQYASNQSGSLDNVY). The helical transmembrane segment at 141 to 161 (LGVVLALVVILTGIFAYYQEA) threads the bilayer. At 162–297 (KSTNIMSSFS…NEKTPIATEI (136 aa)) the chain is on the cytoplasmic side. A helical membrane pass occupies residues 298-317 (EHFVHIVAGVAVSIGILFFI). The Lumenal segment spans residues 318 to 329 (IAVSLKYRVLDS). Residues 330-347 (IIFLIGIIVANVPEGLLA) traverse the membrane as a helical segment. Topologically, residues 348–781 (TVTVTLSLTA…EEGRLIFDNL (434 aa)) are cytoplasmic. Asp385 (4-aspartylphosphate intermediate) is an active-site residue. 2 residues coordinate Mg(2+): Asp726 and Asp730. Residues 782–801 (KKTIAYTLTKNIAELCPFLV) form a helical membrane-spanning segment. The Lumenal segment spans residues 802–811 (YIIVGLPLPI). A helical transmembrane segment spans residues 812 to 832 (GTITILFIDLGTDIIPSIALA). Topologically, residues 833 to 852 (YEKVESDIMNRKPRHKKKDR) are cytoplasmic. The helical transmembrane segment at 853–875 (LVNHQLAIYSYLHIGLMQALGAF) threads the bilayer. At 876-927 (LVYFTVYAQQGFWPTSLIQLRVKWEQDYVNDLEDSYGQQWTRYQRKYLEWTG) the chain is on the lumenal side. Residues 928-947 (YTAFFVGIMVQQIADLIIRK) traverse the membrane as a helical segment. Residues 948–961 (TRRNSIFQQGLFRN) lie on the Cytoplasmic side of the membrane. Phosphoserine; by PKA is present on Ser952. The chain crosses the membrane as a helical span at residues 962-980 (KVIWVGITSQIIVALILSC). Topologically, residues 981–995 (GLGSITALNFTMLRV) are lumenal. The chain crosses the membrane as a helical span at residues 996–1016 (QYWFVAVPHAILIWVYDEVRK). Residues 1017 to 1033 (LFLRLYPGSWWDKNMYY) lie on the Cytoplasmic side of the membrane.

It belongs to the cation transport ATPase (P-type) (TC 3.A.3) family. Type IIC subfamily. In terms of assembly, composed of two subunits: alpha (catalytic) and beta. As to expression, found in skin, kidney and distal colon.

It is found in the membrane. It carries out the reaction K(+)(out) + ATP + H2O + H(+)(in) = K(+)(in) + ADP + phosphate + 2 H(+)(out). Catalyzes the hydrolysis of ATP coupled with the exchange of H(+) and K(+) ions across the plasma membrane. Responsible for potassium absorption in various tissues. This chain is Potassium-transporting ATPase alpha chain 2 (ATP12A), found in Cavia porcellus (Guinea pig).